A 334-amino-acid polypeptide reads, in one-letter code: MIKIAVAGGVTGGHLYPALAVLKELEKLTPIDVLYFTVSGKLEERVLKDYNYKKVSLKIQGLKRPVYSIENIKRLFKIFNANNIVLKELKKFKPDIVFVTGGYVSYPVGTAAKKLKIPLYIQEQNVIPGLANIKLSSFAKKVFVSFEESKKYFQRDVVVAGNPILICHKENLNFEKKTILIVGGSGGSEFLNSLACKLSNKLKDYHFILSSGRKEVPCKSENLTILDYIENMSDYYSAVSCAITRGGATTVSELIFFDTPSIIIPWEGSTEAHQIENAKQIEKLGLGYVIREKEVNIDEIANKIIELSNRERKGSPKTNPAILIAKEIKNEVLK.

Residues 11 to 13, N125, S185, I229, and Q274 each bind UDP-N-acetyl-alpha-D-glucosamine; that span reads TGG.

This sequence belongs to the glycosyltransferase 28 family. MurG subfamily.

The protein localises to the cell inner membrane. It catalyses the reaction di-trans,octa-cis-undecaprenyl diphospho-N-acetyl-alpha-D-muramoyl-L-alanyl-D-glutamyl-meso-2,6-diaminopimeloyl-D-alanyl-D-alanine + UDP-N-acetyl-alpha-D-glucosamine = di-trans,octa-cis-undecaprenyl diphospho-[N-acetyl-alpha-D-glucosaminyl-(1-&gt;4)]-N-acetyl-alpha-D-muramoyl-L-alanyl-D-glutamyl-meso-2,6-diaminopimeloyl-D-alanyl-D-alanine + UDP + H(+). It functions in the pathway cell wall biogenesis; peptidoglycan biosynthesis. Its function is as follows. Cell wall formation. Catalyzes the transfer of a GlcNAc subunit on undecaprenyl-pyrophosphoryl-MurNAc-pentapeptide (lipid intermediate I) to form undecaprenyl-pyrophosphoryl-MurNAc-(pentapeptide)GlcNAc (lipid intermediate II). The protein is UDP-N-acetylglucosamine--N-acetylmuramyl-(pentapeptide) pyrophosphoryl-undecaprenol N-acetylglucosamine transferase of Thermosipho africanus (strain TCF52B).